Consider the following 276-residue polypeptide: Formamidopyrimidine-DNA glycosylase (276 aa).

Proline 2 (schiff-base intermediate with DNA) is an active-site residue. The active-site Proton donor is glutamate 3. Lysine 58 acts as the Proton donor; for beta-elimination activity in catalysis. Residues histidine 94, arginine 112, and arginine 157 each coordinate DNA. The FPG-type zinc-finger motif lies at 242 to 276 (FVYDRAGLPCRVCGTPIKQIVQGQRSTYFCPTCQR). The active-site Proton donor; for delta-elimination activity is the arginine 266.

It belongs to the FPG family. As to quaternary structure, monomer. Requires Zn(2+) as cofactor.

The enzyme catalyses Hydrolysis of DNA containing ring-opened 7-methylguanine residues, releasing 2,6-diamino-4-hydroxy-5-(N-methyl)formamidopyrimidine.. It catalyses the reaction 2'-deoxyribonucleotide-(2'-deoxyribose 5'-phosphate)-2'-deoxyribonucleotide-DNA = a 3'-end 2'-deoxyribonucleotide-(2,3-dehydro-2,3-deoxyribose 5'-phosphate)-DNA + a 5'-end 5'-phospho-2'-deoxyribonucleoside-DNA + H(+). In terms of biological role, involved in base excision repair of DNA damaged by oxidation or by mutagenic agents. Acts as a DNA glycosylase that recognizes and removes damaged bases. Has a preference for oxidized purines, such as 7,8-dihydro-8-oxoguanine (8-oxoG). Has AP (apurinic/apyrimidinic) lyase activity and introduces nicks in the DNA strand. Cleaves the DNA backbone by beta-delta elimination to generate a single-strand break at the site of the removed base with both 3'- and 5'-phosphates. This chain is Formamidopyrimidine-DNA glycosylase, found in Paraburkholderia xenovorans (strain LB400).